A 306-amino-acid polypeptide reads, in one-letter code: GTPase Era (306 aa).

Residues 13-181 (YCGFIAIVGR…EKIVRESLHE (169 aa)) form the Era-type G domain. Residues 21-28 (GRPNVGKS) are G1. 21-28 (GRPNVGKS) contributes to the GTP binding site. Residues 47–51 (QTTRH) form a G2 region. The G3 stretch occupies residues 68–71 (DTPG). GTP-binding positions include 68 to 72 (DTPGL) and 130 to 133 (NKID). The segment at 130 to 133 (NKID) is G4. Positions 160–162 (ISA) are G5. The 78-residue stretch at 212 to 289 (TGDELPYSVT…HLELWVKVKS (78 aa)) folds into the KH type-2 domain.

The protein belongs to the TRAFAC class TrmE-Era-EngA-EngB-Septin-like GTPase superfamily. Era GTPase family. As to quaternary structure, monomer.

The protein resides in the cytoplasm. The protein localises to the cell inner membrane. In terms of biological role, an essential GTPase that binds both GDP and GTP, with rapid nucleotide exchange. Plays a role in 16S rRNA processing and 30S ribosomal subunit biogenesis and possibly also in cell cycle regulation and energy metabolism. The polypeptide is GTPase Era (Pasteurella multocida (strain Pm70)).